The primary structure comprises 358 residues: DNA ligase C (358 aa).

The N6-AMP-lysine intermediate role is filled by K29.

The protein belongs to the ATP-dependent DNA ligase family. A divalent metal cation serves as cofactor.

The catalysed reaction is ATP + (deoxyribonucleotide)n-3'-hydroxyl + 5'-phospho-(deoxyribonucleotide)m = (deoxyribonucleotide)n+m + AMP + diphosphate.. In terms of biological role, DNA ligase that seals nicks in double-stranded DNA during DNA replication, DNA recombination and DNA repair. The protein is DNA ligase C (ligC) of Mycobacterium tuberculosis (strain ATCC 25618 / H37Rv).